A 123-amino-acid chain; its full sequence is Large ribosomal subunit protein bL12 (123 aa).

Belongs to the bacterial ribosomal protein bL12 family. Homodimer. Part of the ribosomal stalk of the 50S ribosomal subunit. Forms a multimeric L10(L12)X complex, where L10 forms an elongated spine to which 2 to 4 L12 dimers bind in a sequential fashion. Binds GTP-bound translation factors.

Functionally, forms part of the ribosomal stalk which helps the ribosome interact with GTP-bound translation factors. Is thus essential for accurate translation. This is Large ribosomal subunit protein bL12 from Chlorobium phaeovibrioides (strain DSM 265 / 1930) (Prosthecochloris vibrioformis (strain DSM 265)).